Consider the following 317-residue polypeptide: Putative AP2/ERF and B3 domain-containing protein Os01g0140700 (317 aa).

The segment at 1 to 37 is disordered; sequence MEQEAAMVVFSCNSGSGGSSSTTDSKQEEEEEEELAA. Residues 27 to 37 are compositionally biased toward acidic residues; it reads QEEEEEEELAA. The AP2/ERF DNA-binding region spans 66 to 121; that stretch reads RYKGVVPQPNGRWGAQIYERHARVWLGTFPDEEAAARAYDVAALRFRGRDAVTNRA. A DNA-binding region (TF-B3) is located at residues 178–287; the sequence is FEKAVTPSDV…EKHLLIDCKK (110 aa).

The protein localises to the nucleus. This Oryza sativa subsp. japonica (Rice) protein is Putative AP2/ERF and B3 domain-containing protein Os01g0140700.